The chain runs to 411 residues: Pre-mRNA-splicing factor dre4 (411 aa).

The WW 1 domain maps to 3–36; that stretch reads QPLPPGWTEHKAPSGIPYYWNAELKKSTYQRPSF. The interval 65–84 is disordered; the sequence is NAEERKNSRDLRKQLPDRPK. Over residues 66-83 the composition is skewed to basic and acidic residues; sequence AEERKNSRDLRKQLPDRP. The 34-residue stretch at 89 to 122 folds into the WW 2 domain; that stretch reads IPNNDSWVVVFTKKNRYFFHNLKSHESYWEPPLE. The segment at 138–209 is disordered; it reads ISKDSSQSQN…KSHSAEELEF (72 aa). The segment covering 140–151 has biased composition (polar residues); that stretch reads KDSSQSQNVDSG. The span at 152-166 shows a compositional bias: basic and acidic residues; the sequence is KTNHEEIHESRHLQT. Over residues 167–179 the composition is skewed to acidic residues; it reads EIEEPSGLEESSE. The FF domain occupies 239 to 293; sequence TDDARRVFTELLKDKNIGAYQPWELVYPKLLDDDRFYVLDSGERRKEVFEEYCKS.

As to quaternary structure, component of the spliceosomal complex. Interacts with prp19.

It localises to the nucleus. Its function is as follows. Component of the spliceosome involved in mRNA processing. The polypeptide is Pre-mRNA-splicing factor dre4 (dre4) (Schizosaccharomyces pombe (strain 972 / ATCC 24843) (Fission yeast)).